Reading from the N-terminus, the 569-residue chain is MSYKIDRNTYAQTFGPTTGDRVRLADTELFIEVEKDLTTYGDEVKFGGGKVIRDGMGQSQVRRADGAVDTVITNALIVDWWGIIKADVGIKDGMIFEIGKAGNPDIQDNVDIVIGASTEVIAGEGHILTAGSIDTHIHFICPQQIETALASGITTMLGGGTGPATGTNATTCTPGSFHISRMLQSAEAFPMNLGFFGKGNSTNETNLIDQVEAGACGLKLHEDWGTTPSTINSCLNVADKFDVQVCIHTDTLNEAGFVEDTINAIAGRTIHTFHTEGAGGGHAPDIIKICGEKNVLPSSTNPTRPYTRNTLEEHLDMLMVCHHLDSKIPEDIAFAESRIRRETIAAEDILHDMGAFSIIASDSQAMGRVGEVITRTFQTAHKMKVQRGPLSQDSDINDNYRVKRYISKVTINPAIAHGIDKHVGSIEKGKIADLALWKPSFFAVKPELVVKGGSIVWSQMGDANASIPTPGPVHGRPMFASFGQSLIKSSFTFLSKNSIDQNIPNKLGLQKKCIAVENTRNINKSHLKLNSKLPNISVDPQTYEVFSDGELLTCEPLDEVPMAQRYFLL.

The Urease domain occupies 131–569 (GSIDTHIHFI…VPMAQRYFLL (439 aa)). Ni(2+) contacts are provided by H136, H138, and K219. K219 is subject to N6-carboxylysine. H221 contributes to the substrate binding site. Positions 248 and 274 each coordinate Ni(2+). The Proton donor role is filled by H322. Residue D362 coordinates Ni(2+).

This sequence belongs to the metallo-dependent hydrolases superfamily. Urease alpha subunit family. In terms of assembly, heterotrimer of UreA (gamma), UreB (beta) and UreC (alpha) subunits. Three heterotrimers associate to form the active enzyme. Ni cation is required as a cofactor. Carboxylation allows a single lysine to coordinate two nickel ions.

The protein localises to the cytoplasm. It catalyses the reaction urea + 2 H2O + H(+) = hydrogencarbonate + 2 NH4(+). The protein operates within nitrogen metabolism; urea degradation; CO(2) and NH(3) from urea (urease route): step 1/1. The protein is Urease subunit alpha of Prochlorococcus marinus (strain MIT 9301).